The sequence spans 1769 residues: Tight junction protein 1 (1769 aa).

The region spanning 23 to 110 (TVTLHRAPGF…NAKITIRRKK (88 aa)) is the PDZ 1 domain. Basic residues predominate over residues 102–112 (AKITIRRKKKV). The interval 102 to 188 (AKITIRRKKK…QPPKPTKVTL (87 aa)) is disordered. Residues 123–135 (PVSENEDSYDEEV) show a composition bias toward acidic residues. Ser-125 carries the post-translational modification Phosphoserine. Tyr-131 bears the Phosphotyrosine mark. The span at 148–174 (RRSEKSWARDRSASRERSLSPRSDRRS) shows a compositional bias: basic and acidic residues. A phosphoserine mark is found at Ser-174, Ser-177, and Ser-178. Thr-184 is modified (phosphothreonine). A PDZ 2 domain is found at 185 to 263 (KVTLVKSRKN…KLKMVVQRDE (79 aa)). Phosphoserine is present on residues Ser-211 and Ser-240. A Phosphothreonine modification is found at Thr-266. 13 positions are modified to phosphoserine: Ser-274, Ser-276, Ser-279, Ser-283, Ser-289, Ser-293, Ser-296, Ser-299, Ser-322, Ser-328, Ser-333, Ser-336, and Ser-352. The tract at residues 295-362 (ASDHSGRSHD…TPVKHADDHT (68 aa)) is disordered. Positions 298-326 (HSGRSHDRPPRHSRSRSPDQRSEPSDHSR) are enriched in basic and acidic residues. A Phosphothreonine modification is found at Thr-353. In terms of domain architecture, PDZ 3 spans 420 to 501 (SMKLVKFRKG…GEEVTILAQK (82 aa)). The SH3 domain occupies 515-583 (GDSFYIRTHF…PNKNRAEQLA (69 aa)). One can recognise a Guanylate kinase-like domain in the interval 609–790 (SKRNLRKSRE…WYGALKEAIQ (182 aa)). Phosphoserine is present on residues Ser-616 and Ser-621. The occludin (OCLN)-binding region stretch occupies residues 632–875 (YERVVLREAG…GTPPESAITR (244 aa)). Thr-808 bears the Phosphothreonine mark. Phosphoserine occurs at positions 809 and 820. Tyr-821 is subject to Phosphotyrosine. Phosphoserine occurs at positions 823, 827, and 836. 2 disordered regions span residues 824–976 (APGS…LRTP) and 1010–1067 (EMMR…SYTD). Residues Thr-845, Thr-847, Thr-853, Thr-860, and Thr-867 each carry the phosphothreonine modification. A compositionally biased stretch (basic and acidic residues) spans 878–891 (EPVREDSSGMHHEN). Positions 892–905 (QTYPPYSPQAQPQP) are enriched in low complexity. A Phosphoserine modification is found at Ser-911. Polar residues-rich tracts occupy residues 933–952 (PETNPASSTSAVNHNVTLTN) and 962–976 (PSTSYSPQADSLRTP). At Ser-967 the chain carries Phosphoserine. Ser-1070 carries the post-translational modification Phosphoserine. Disordered stretches follow at residues 1091-1212 (SYYD…KAGH), 1224-1261 (PLIPASQHKPEVLPSNTKPLPPPPTLTEEEEDPAMKPQ), and 1273-1589 (KRSA…EFDS). The segment covering 1108–1124 (QHPRDLDSRQHPEESSE) has biased composition (basic and acidic residues). At Ser-1138 the chain carries Phosphoserine. 2 positions are modified to phosphotyrosine: Tyr-1139 and Tyr-1164. The tract at residues 1150–1370 (RTSTLRHEEQ…FDRRSFENKP (221 aa)) is actin-binding region (ABR). The span at 1273-1286 (KRSASLENKKDENH) shows a compositional bias: basic and acidic residues. Residues 1300 to 1310 (PGAPIIGPKPT) are compositionally biased toward pro residues. Positions 1335–1346 (PPEDIVRSNHYD) are enriched in basic and acidic residues. Tyr-1353 carries the post-translational modification Phosphotyrosine. Ser-1365 bears the Phosphoserine mark. A compositionally biased stretch (polar residues) spans 1387–1401 (HSQNQTNFSSYSSKG). Residues 1402–1419 (KSPEADAPDRSFGEKRYE) are compositionally biased toward basic and acidic residues. Position 1412 is a phosphoserine (Ser-1412). Polar residues-rich tracts occupy residues 1460–1471 (NSISLDFQNSLV) and 1514–1523 (AEQTQKTVTP). The span at 1539–1548 (PFERKFESPK) shows a compositional bias: basic and acidic residues. Phosphoserine occurs at positions 1546 and 1618. In terms of domain architecture, ZU5 spans 1635–1769 (ATARGVFNNN…NCVSVLIDHF (135 aa)).

The protein belongs to the MAGUK family. As to quaternary structure, homodimer. Forms heterodimers TJP3. Forms a heterodimer (via PDZ2 domain) with TJP2/ZO2 (via PDZ2 domain). Interacts with OCLN. Interacts with CALM, claudins, CGN/cingulin, CXADR, GJA12, GJD3 and UBN1. Interacts (via ZU5 domain) with CDC42BPB and MYZAP. Interacts (via PDZ domain) with GJA1. Interacts (via PDZ domains) with ANKRD2. Interacts with POPDC1 (via the C-terminus cytoplasmic tail). Interacts with HSPA4. Interacts with KIRREL1. Interacts with DLL1. Interacts with USP53 (via the C-terminal region). Interacts with DNMBP (via C-terminal domain); required for the apical cell-cell junction localization of DNMBP. Interacts with SPEF1. Interacts (via N-terminus) with CTNNA1. Interacts with CLDN18. Interacts with CLDN16 (via TRV motif); this is a prerequisite for anchoring of CLDN16 at the tight junction. Interacts with PKP1; the interaction facilitates TJP1/ZO-1 localization to the plasma membrane. Interacts with PATJ (via PDZ1-6 domains); the interaction is required for attachment and extension of TJP1/ZO1 condensates along the apical cell interface. In terms of processing, phosphorylated at tyrosine redidues in response to epidermal growth factor (EGF). This response is dependent on an intact actin microfilament system. Dephosphorylated by PTPRJ.

The protein localises to the cell membrane. The protein resides in the cell junction. It localises to the tight junction. Its subcellular location is the gap junction. Its function is as follows. TJP1, TJP2, and TJP3 are closely related scaffolding proteins that link tight junction (TJ) transmembrane proteins such as claudins, junctional adhesion molecules, and occludin to the actin cytoskeleton. Forms a multistranded TJP1/ZO1 condensate which elongates to form a tight junction belt, the belt is anchored at the apical cell membrane via interaction with PATJ. The tight junction acts to limit movement of substances through the paracellular space and as a boundary between the compositionally distinct apical and basolateral plasma membrane domains of epithelial and endothelial cells. Necessary for lumenogenesis, and particularly efficient epithelial polarization and barrier formation. Plays a role in the regulation of cell migration by targeting CDC42BPBb to the leading edge of migrating cells. With TJP2 and TJP3, participates in the junctional retention and stability of the transcription factor DBPA, but is not involved in its shuttling to the nucleus. May play a role in mediating cell morphology changes during ameloblast differentiation via its role in tight junctions. The protein is Tight junction protein 1 of Canis lupus familiaris (Dog).